The following is a 696-amino-acid chain: ATP-dependent zinc metalloprotease FtsH (696 aa).

Residues 1-29 (MWLQVTNCSTLHSSLSYCGANTLSDMAKN) are Cytoplasmic-facing. Residues 30 to 50 (LILWLVIAVVLMSVFQSFGPS) traverse the membrane as a helical segment. Residues 51–124 (DSAGRQVDYT…LGTPPEEPSL (74 aa)) are Periplasmic-facing. The helical transmembrane segment at 125-145 (LASIFISWFPMLLLIGVWVFF) threads the bilayer. The Cytoplasmic segment spans residues 146–696 (MRQMQGGGGG…APKEDDKPQA (551 aa)). 219–226 (GPPGTGKT) contributes to the ATP binding site. Histidine 441 serves as a coordination point for Zn(2+). The active site involves glutamate 442. Histidine 445 and aspartate 519 together coordinate Zn(2+). A disordered region spans residues 627–696 (RAPKGWGDTD…APKEDDKPQA (70 aa)). A compositionally biased stretch (basic and acidic residues) spans 650–696 (PEAKTESAPEAKAEANVETEEKPVAADSEELKPKAEQAPKEDDKPQA).

It in the central section; belongs to the AAA ATPase family. The protein in the C-terminal section; belongs to the peptidase M41 family. In terms of assembly, homohexamer. Zn(2+) serves as cofactor.

It is found in the cell inner membrane. Functionally, acts as a processive, ATP-dependent zinc metallopeptidase for both cytoplasmic and membrane proteins. Plays a role in the quality control of integral membrane proteins. The protein is ATP-dependent zinc metalloprotease FtsH of Photobacterium profundum (strain SS9).